A 533-amino-acid polypeptide reads, in one-letter code: DNA-directed RNA polymerase III subunit RPC3 (533 aa).

A disordered region spans residues 161–183; it reads PLVPDTDSSDPGPPPPAPNLVIN. A Phosphoserine modification is found at Ser194. The interval 197 to 228 is disordered; that stretch reads GKGKRRRSSDEDAAGEPKAKKPRCTDNEEPTP. Residues 211-222 show a composition bias toward basic and acidic residues; it reads GEPKAKKPRCTD.

It belongs to the eukaryotic RPC3/POLR3C RNA polymerase subunit family. In terms of assembly, component of the RNA polymerase III complex consisting of 17 subunits: a ten-subunit horseshoe-shaped catalytic core composed of POLR3A/RPC1, POLR3B/RPC2, POLR1C/RPAC1, POLR1D/RPAC2, POLR3K/RPC10, POLR2E/RPABC1, POLR2F/RPABC2, POLR2H/RPABC3, POLR2K/RPABC4 and POLR2L/RPABC5; a mobile stalk composed of two subunits POLR3H/RPC8 and CRCP/RPC9, protruding from the core and functioning primarily in transcription initiation; and additional subunits homologous to general transcription factors of the RNA polymerase II machinery, POLR3C/RPC3-POLR3F/RPC6-POLR3G/RPC7 heterotrimer required for transcription initiation and POLR3D/RPC4-POLR3E/RPC5 heterodimer involved in both transcription initiation and termination. Directly interacts with POLR3G/RPC7 and POLR3GL. Directly interacts with POLR3F/RPC6. Interacts with GTF3C4. As part of the RNA polymerase III complex, interacts with PKP2.

The protein localises to the nucleus. In terms of biological role, DNA-dependent RNA polymerase catalyzes the transcription of DNA into RNA using the four ribonucleoside triphosphates as substrates. Specific peripheric component of RNA polymerase III (Pol III) which synthesizes small non-coding RNAs including 5S rRNA, snRNAs, tRNAs and miRNAs from at least 500 distinct genomic loci. Part of POLR3C/RPC3-POLR3F/RPC6-POLR3G/RPC7 heterotrimer, coordinates the dynamics of Pol III stalk and clamp modules during the transition from apo to elongation state. Pol III plays a key role in sensing and limiting infection by intracellular bacteria and DNA viruses. Acts as a nuclear and cytosolic DNA sensor involved in innate immune response. Can sense non-self dsDNA that serves as template for transcription into dsRNA. The non-self RNA polymerase III transcripts, such as Epstein-Barr virus-encoded RNAs (EBERs) induce type I interferon and NF-kappa-B through the RIG-I pathway. Preferentially binds single-stranded DNA (ssDNA) in a sequence-independent manner. The polypeptide is DNA-directed RNA polymerase III subunit RPC3 (Rattus norvegicus (Rat)).